The chain runs to 360 residues: Phosphoserine aminotransferase (360 aa).

Residue arginine 41 participates in L-glutamate binding. Residues 75–76 (AS), tryptophan 101, threonine 151, aspartate 171, and glutamine 194 each bind pyridoxal 5'-phosphate. At lysine 195 the chain carries N6-(pyridoxal phosphate)lysine. 236 to 237 (NT) is a binding site for pyridoxal 5'-phosphate.

The protein belongs to the class-V pyridoxal-phosphate-dependent aminotransferase family. SerC subfamily. In terms of assembly, homodimer. Requires pyridoxal 5'-phosphate as cofactor.

It is found in the cytoplasm. The catalysed reaction is O-phospho-L-serine + 2-oxoglutarate = 3-phosphooxypyruvate + L-glutamate. The enzyme catalyses 4-(phosphooxy)-L-threonine + 2-oxoglutarate = (R)-3-hydroxy-2-oxo-4-phosphooxybutanoate + L-glutamate. The protein operates within amino-acid biosynthesis; L-serine biosynthesis; L-serine from 3-phospho-D-glycerate: step 2/3. It functions in the pathway cofactor biosynthesis; pyridoxine 5'-phosphate biosynthesis; pyridoxine 5'-phosphate from D-erythrose 4-phosphate: step 3/5. Functionally, catalyzes the reversible conversion of 3-phosphohydroxypyruvate to phosphoserine and of 3-hydroxy-2-oxo-4-phosphonooxybutanoate to phosphohydroxythreonine. In Herpetosiphon aurantiacus (strain ATCC 23779 / DSM 785 / 114-95), this protein is Phosphoserine aminotransferase.